A 79-amino-acid chain; its full sequence is D-alanyl carrier protein (79 aa).

Residues M1–K76 form the Carrier domain. S34 carries the O-(pantetheine 4'-phosphoryl)serine modification.

Belongs to the DltC family. 4'-phosphopantetheine is transferred from CoA to a specific serine of apo-DCP.

Its subcellular location is the cytoplasm. It functions in the pathway cell wall biogenesis; lipoteichoic acid biosynthesis. Functionally, carrier protein involved in the D-alanylation of lipoteichoic acid (LTA). The loading of thioester-linked D-alanine onto DltC is catalyzed by D-alanine--D-alanyl carrier protein ligase DltA. The DltC-carried D-alanyl group is further transferred to cell membrane phosphatidylglycerol (PG) by forming an ester bond, probably catalyzed by DltD. D-alanylation of LTA plays an important role in modulating the properties of the cell wall in Gram-positive bacteria, influencing the net charge of the cell wall. This Lactococcus lactis subsp. lactis (strain IL1403) (Streptococcus lactis) protein is D-alanyl carrier protein.